The chain runs to 179 residues: Replication restart protein DnaT (179 aa).

A disordered region spans residues 151–179; the sequence is SRASNGGQPKRDVNSVSEPDSHIPRGFRG. Basic and acidic residues predominate over residues 159–173; it reads PKRDVNSVSEPDSHI.

Belongs to the DnaT family. Homooligomerizes. Interacts with PriB. Component of the replication restart primosome. Primosome assembly occurs via a 'hand-off' mechanism. PriA binds to replication forks, subsequently PriB then DnaT bind; DnaT then displaces ssDNA to generate the helicase loading substrate.

In terms of biological role, involved in the restart of stalled replication forks, which reloads the replicative helicase on sites other than the origin of replication. Can function in multiple replication restart pathways. Displaces ssDNA from a PriB-ssDNA complex. Probably forms a spiral filament on ssDNA. This is Replication restart protein DnaT from Klebsiella pneumoniae (strain 342).